Reading from the N-terminus, the 414-residue chain is Histidine--tRNA ligase (414 aa).

The protein belongs to the class-II aminoacyl-tRNA synthetase family. In terms of assembly, homodimer.

The protein localises to the cytoplasm. The catalysed reaction is tRNA(His) + L-histidine + ATP = L-histidyl-tRNA(His) + AMP + diphosphate + H(+). This Pelobacter propionicus (strain DSM 2379 / NBRC 103807 / OttBd1) protein is Histidine--tRNA ligase.